The primary structure comprises 486 residues: Kynureninase 1 (486 aa).

The disordered stretch occupies residues 53–72 (DLKRTTLDPNQEPEHSPTPS). Pyridoxal 5'-phosphate contacts are provided by residues leucine 146, threonine 147, 174–177 (FPSD), serine 231, aspartate 260, histidine 263, and tyrosine 285. Lysine 286 is subject to N6-(pyridoxal phosphate)lysine. Positions 326 and 354 each coordinate pyridoxal 5'-phosphate.

Belongs to the kynureninase family. As to quaternary structure, homodimer. Pyridoxal 5'-phosphate is required as a cofactor.

The protein resides in the cytoplasm. It catalyses the reaction L-kynurenine + H2O = anthranilate + L-alanine + H(+). The enzyme catalyses 3-hydroxy-L-kynurenine + H2O = 3-hydroxyanthranilate + L-alanine + H(+). It functions in the pathway amino-acid degradation; L-kynurenine degradation; L-alanine and anthranilate from L-kynurenine: step 1/1. Its pathway is cofactor biosynthesis; NAD(+) biosynthesis; quinolinate from L-kynurenine: step 2/3. Its function is as follows. Catalyzes the cleavage of L-kynurenine (L-Kyn) and L-3-hydroxykynurenine (L-3OHKyn) into anthranilic acid (AA) and 3-hydroxyanthranilic acid (3-OHAA), respectively. This chain is Kynureninase 1 (bna5-1), found in Aspergillus clavatus (strain ATCC 1007 / CBS 513.65 / DSM 816 / NCTC 3887 / NRRL 1 / QM 1276 / 107).